A 1203-amino-acid chain; its full sequence is Zinc finger and BTB domain-containing protein 38 (1203 aa).

Residues 33–100 enclose the BTB domain; that stretch reads CDVTIIVEDT…IYSSTVVVRR (68 aa). A Glycyl lysine isopeptide (Lys-Gly) (interchain with G-Cter in SUMO2) cross-link involves residue K43. Residue S130 is modified to Phosphoserine. Residues K145, K148, K151, and K260 each participate in a glycyl lysine isopeptide (Lys-Gly) (interchain with G-Cter in SUMO2) cross-link. Residues 230–334 are disordered; the sequence is EAYRSQPLRE…PSETPGPPAA (105 aa). The segment covering 269–280 has biased composition (polar residues); sequence TQTQDSDSTTEN. The interaction with CBFA2T3 stretch occupies residues 299 to 522; that stretch reads PAPILSHSEP…RRYQCIFCLE (224 aa). Residues 313-322 show a composition bias toward basic and acidic residues; sequence GDVHFPREDE. The C2H2-type 1 zinc-finger motif lies at 341–363; the sequence is YNCSCCSKSFDSSTLLGAHMQLH. The C2H2-type 2; degenerate zinc finger occupies 370 to 394; that stretch reads FVCKYCNKQFTTLNRLDRHEQICMR. 3 consecutive C2H2-type zinc fingers follow at residues 459–481, 487–509, and 515–538; these read YSCV…ANVH, YPCH…EIWH, and YQCI…KSFH. Residues K549 and K556 each participate in a glycyl lysine isopeptide (Lys-Gly) (interchain with G-Cter in SUMO2) cross-link. Composition is skewed to polar residues over residues 581 to 598, 607 to 628, 635 to 644, and 731 to 741; these read RNSS…NESP, LPSS…TSSP, PSWQGTPTSA, and SNHQSPSQPVA. Disordered stretches follow at residues 581 to 644 and 731 to 776; these read RNSS…PTSA and SNHQ…VPCN. The segment covering 747-757 has biased composition (basic and acidic residues); it reads KDSKPEADKAS. Residues K750, K755, K796, K806, K813, K834, K842, and K849 each participate in a glycyl lysine isopeptide (Lys-Gly) (interchain with G-Cter in SUMO2) cross-link. 2 disordered regions span residues 857–882 and 895–914; these read KPKY…SPLG and FDEV…YYNY. Positions 866 to 877 are enriched in basic and acidic residues; sequence TLPRESDPETRG. Glycyl lysine isopeptide (Lys-Gly) (interchain with G-Cter in SUMO2) cross-links involve residues K915, K971, K976, K984, K988, K998, K1024, and K1033. 5 C2H2-type zinc fingers span residues 1017 to 1039, 1045 to 1067, 1073 to 1095, 1101 to 1123, and 1132 to 1154; these read YICE…MRCH, YQCK…ERIH, FICQ…ERIH, YHCQ…ERRH, and FACF…QKKH. Residues K1116, K1139, K1142, K1157, and K1190 each participate in a glycyl lysine isopeptide (Lys-Gly) (interchain with G-Cter in SUMO2) cross-link. Positions 1172–1203 are disordered; sequence NSDLLESQPCTDSEDSDQKDDIKKPLLKMSFE.

In terms of assembly, interacts with CBFA2T3, ZBTB4 and RBBP6. In terms of processing, ubiquitinated by RBBP6; leading to its degradation by the proteasome. In terms of tissue distribution, widely expressed throughout the adult brain where it is found mainly in neurons. Also expressed in the adrenal medulla. Not detected in non-neural tissues including heart, spleen, liver and muscle. In the embryo, expressed in the developing brain and spinal cord but not in the migratory neural crest. Also expressed in the limbs, transiently in somites, and in the embryonic liver. In the embryonic neural tube, expression is restricted to late postmitotic neurons.

The protein resides in the nucleus. It is found in the chromosome. In terms of biological role, transcriptional regulator with bimodal DNA-binding specificity. Binds with a higher affinity to methylated CpG dinucleotides in the consensus sequence 5'-CGCG-3' but can also bind to E-box elements (5'-CACGTG-3'). Can also bind specifically to a single methyl-CpG pair. Represses transcription in a methyl-CpG-dependent manner. Plays an important role in regulating DNA-replication and common fragile sites (CFS) stability in a RBBP6- and MCM10-dependent manner; represses expression of MCM10 which plays an important role in DNA-replication. Acts as a transcriptional activator. May be involved in the differentiation and/or survival of late postmitotic neurons. The sequence is that of Zinc finger and BTB domain-containing protein 38 from Rattus norvegicus (Rat).